The sequence spans 543 residues: Small conductance calcium-activated potassium channel protein 1 (543 aa).

The disordered stretch occupies residues 1–92 (MNSHSYNGSV…SGKPSNVGHR (92 aa)). Over residues 65–76 (DQDDDEDDEEDE) the composition is skewed to acidic residues. A helical membrane pass occupies residues 111–131 (LIFGMFGIVVMVTETELSWGV). A helical membrane pass occupies residues 140-160 (FALKCLISLSTAILLGLVVLY). The helical transmembrane segment at 179-199 (IAMTCERVFLISLELAVCAIH) threads the bilayer. Residues 228–248 (VLLSIPMFLRLYLLGRVMLLH) traverse the membrane as a helical segment. The helical transmembrane segment at 277–297 (LMTICPGTVLLVFSISSWIIA) threads the bilayer. The segment at residues 317–337 (FLGAMWLISITFLSIGYGDMV) is an intramembrane region (pore-forming). Residues 346–366 (VCLLTGIMGAGCTALVVAVVA) traverse the membrane as a helical segment. The interval 384 to 463 (DTQLTKRVKN…LTDLAKTQTV (80 aa)) is calmodulin-binding. The interval 505 to 543 (QAIRPPPPPLPPRPGPGPQDQAARSSPCRWTPVAPSDCG) is disordered. A compositionally biased stretch (pro residues) spans 508 to 521 (RPPPPPLPPRPGPG).

Belongs to the potassium channel KCNN family. KCa2.1/KCNN1 subfamily. Homodimer. Heteromultimer with KCNN2 and KCNN3. The complex is composed of 4 channel subunits each of which binds to a calmodulin subunit which regulates the channel activity through calcium-binding. Interacts with calmodulin.

The protein localises to the membrane. It localises to the cytoplasm. Its subcellular location is the myofibril. It is found in the sarcomere. The protein resides in the z line. The catalysed reaction is K(+)(in) = K(+)(out). Its activity is regulated as follows. Inhibited by bee venom neurotoxin apamin. Inhibited by d-tubocurarine and tetraethylammonium (TEA). Functionally, small conductance calcium-activated potassium channel that mediates the voltage-independent transmembrane transfer of potassium across the cell membrane through a constitutive interaction with calmodulin which binds the intracellular calcium allowing its opening. The current is characterized by a voltage-independent activation, an intracellular calcium concentration increase-dependent activation and a single-channel conductance of about 3 picosiemens. Also presents an inwardly rectifying current, thus reducing its already small outward conductance of potassium ions, which is particularly the case when the membrane potential displays positive values, above + 20 mV. Activation is followed by membrane hyperpolarization. Thought to regulate neuronal excitability by contributing to the slow component of synaptic afterhyperpolarization. This Homo sapiens (Human) protein is Small conductance calcium-activated potassium channel protein 1.